The sequence spans 88 residues: Large ribosomal subunit protein bL31B (88 aa).

This sequence belongs to the bacterial ribosomal protein bL31 family. Type B subfamily. As to quaternary structure, part of the 50S ribosomal subunit.

The chain is Large ribosomal subunit protein bL31B from Burkholderia orbicola (strain MC0-3).